Consider the following 296-residue polypeptide: Large ribosomal subunit protein uL15m (296 aa).

Residues methionine 1–arginine 20 constitute a mitochondrion transit peptide. The segment at asparagine 25 to glycine 66 is disordered. A compositionally biased stretch (basic residues) spans alanine 32 to glycine 52.

The protein belongs to the universal ribosomal protein uL15 family. As to quaternary structure, component of the mitochondrial ribosome large subunit (39S) which comprises a 16S rRNA and about 50 distinct proteins.

Its subcellular location is the mitochondrion. The protein is Large ribosomal subunit protein uL15m (mrpl15) of Xenopus laevis (African clawed frog).